The chain runs to 101 residues: Urease subunit beta (101 aa).

This sequence belongs to the urease beta subunit family. In terms of assembly, heterotrimer of UreA (gamma), UreB (beta) and UreC (alpha) subunits. Three heterotrimers associate to form the active enzyme.

It localises to the cytoplasm. It catalyses the reaction urea + 2 H2O + H(+) = hydrogencarbonate + 2 NH4(+). It participates in nitrogen metabolism; urea degradation; CO(2) and NH(3) from urea (urease route): step 1/1. This Rhizobium leguminosarum bv. trifolii (strain WSM2304) protein is Urease subunit beta.